Here is a 255-residue protein sequence, read N- to C-terminus: GTP cyclohydrolase III (255 aa).

It belongs to the archaeal-type GTP cyclohydrolase family.

It carries out the reaction GTP + 3 H2O = 2-amino-5-formylamino-6-(5-phospho-D-ribosylamino)pyrimidin-4(3H)-one + 2 phosphate + 2 H(+). In terms of biological role, catalyzes the formation of 2-amino-5-formylamino-6-ribofuranosylamino-4(3H)-pyrimidinone ribonucleotide monophosphate and inorganic phosphate from GTP. Also has an independent pyrophosphate phosphohydrolase activity. In Methanosphaera stadtmanae (strain ATCC 43021 / DSM 3091 / JCM 11832 / MCB-3), this protein is GTP cyclohydrolase III.